Reading from the N-terminus, the 113-residue chain is Large ribosomal subunit protein bL19 (113 aa).

This sequence belongs to the bacterial ribosomal protein bL19 family.

In terms of biological role, this protein is located at the 30S-50S ribosomal subunit interface and may play a role in the structure and function of the aminoacyl-tRNA binding site. The protein is Large ribosomal subunit protein bL19 of Rhodococcus erythropolis (strain PR4 / NBRC 100887).